The sequence spans 157 residues: Arginine repressor (157 aa).

It belongs to the ArgR family.

It localises to the cytoplasm. It functions in the pathway amino-acid biosynthesis; L-arginine biosynthesis [regulation]. Functionally, regulates arginine biosynthesis genes. In Lactobacillus delbrueckii subsp. bulgaricus (strain ATCC 11842 / DSM 20081 / BCRC 10696 / JCM 1002 / NBRC 13953 / NCIMB 11778 / NCTC 12712 / WDCM 00102 / Lb 14), this protein is Arginine repressor.